A 105-amino-acid polypeptide reads, in one-letter code: Large ribosomal subunit protein eL36 (105 aa).

Lys62 carries the N6-acetyllysine modification.

It belongs to the eukaryotic ribosomal protein eL36 family. As to quaternary structure, component of the large ribosomal subunit.

The protein localises to the cytoplasm. The protein resides in the cytosol. Functionally, component of the large ribosomal subunit. The ribosome is a large ribonucleoprotein complex responsible for the synthesis of proteins in the cell. This chain is Large ribosomal subunit protein eL36 (RPL36), found in Bos taurus (Bovine).